Reading from the N-terminus, the 388-residue chain is Na(+)/H(+) antiporter NhaA (388 aa).

Over 1–11 the chain is Cytoplasmic; the sequence is MKHLHRFFSSD. A helical transmembrane segment spans residues 12–31; it reads ASGGIILIIAAVLAMIMANS. Residues 32–58 are Periplasmic-facing; it reads GATSGWYHDFLETPVQLRVGTLEINKN. The helical transmembrane segment at 59-80 threads the bilayer; it reads MLLWINDALMAVFFLLVGLEVK. The Cytoplasmic segment spans residues 81–96; that stretch reads RELMQGSLASLRQAAF. The helical transmembrane segment at 97-116 threads the bilayer; the sequence is PVIAAIGGMIVPALLYLAFN. The Periplasmic segment spans residues 117–122; the sequence is YADPIT. A helical membrane pass occupies residues 123–130; sequence REGWAIPA. Residues 131–154 are Cytoplasmic-facing; sequence ATDIAFALGVLALLGSRVPLALKI. Residues 155–176 form a helical membrane-spanning segment; the sequence is FLMALAIIDDLGAIIIIALFYT. Topologically, residues 177–180 are periplasmic; the sequence is NDLS. The chain crosses the membrane as a helical span at residues 181 to 200; it reads MASLGVAAVAIAVLAVLNLC. Over 201-204 the chain is Cytoplasmic; it reads GVRR. The chain crosses the membrane as a helical span at residues 205–222; the sequence is TGVYILVGVVLWTAVLKS. G223 is a topological domain (periplasmic). The helical transmembrane segment at 224–236 threads the bilayer; it reads VHATLAGVIVGFF. Topologically, residues 237–253 are cytoplasmic; the sequence is IPLKEKHGRSPAKRLEH. A helical transmembrane segment spans residues 254-272; the sequence is VLHPWVAYLILPLFAFANA. The Periplasmic portion of the chain corresponds to 273–286; it reads GVSLQGVTLEGLTS. Residues 287–310 traverse the membrane as a helical segment; sequence ILPLGIIAGLLIGKPLGISLFCWL. Residues 311-339 are Cytoplasmic-facing; sequence ALRLKLAHLPEGTTYQQIMAVGILCGIGF. Residues 340-350 form a helical membrane-spanning segment; that stretch reads TMSIFIASLAF. Residues 351–357 are Periplasmic-facing; sequence GSVDPEL. The helical transmembrane segment at 358-380 threads the bilayer; sequence INWAKLGILVGSISSAVIGYSWL. Over 381 to 388 the chain is Cytoplasmic; it reads RVRLRPSV.

Belongs to the NhaA Na(+)/H(+) (TC 2.A.33) antiporter family.

It localises to the cell inner membrane. The enzyme catalyses Na(+)(in) + 2 H(+)(out) = Na(+)(out) + 2 H(+)(in). Na(+)/H(+) antiporter that extrudes sodium in exchange for external protons. The polypeptide is Na(+)/H(+) antiporter NhaA (Escherichia coli O6:K15:H31 (strain 536 / UPEC)).